The following is a 357-amino-acid chain: MTDLNTLEADVLAQVAAASDLQALDAVRVAAVGKTGSISGLLKTLGAMSPEERKTQGAAINALRDKVQDAITQKKAALEAAELDARLASETLDLSLPAPYRRKGSVHPTMQTMDEVVAIFAEMGFAVAEGPDIEDDFHNFTALNFPEKHPAREMHDTFFFNPKEDGERMLLRTHTSPVQVRTMVSQKPPIRIIAPGRTYRCDNDATHTPVFHQVEGLVIDKGIHMGHLKWTLETFLARFFETDAVTTQFRPHHFPFTEPSAEMDVQCDRSGGEIKIGQGTSWLEILGCGMVHPNVLRACGIDPDEYQGFAFGMGVDRLGMLKYGMPDLRDMWSSDVRWLSHYGFSAFAAPNPASGLS.

Residue E258 participates in Mg(2+) binding.

The protein belongs to the class-II aminoacyl-tRNA synthetase family. Phe-tRNA synthetase alpha subunit type 1 subfamily. As to quaternary structure, tetramer of two alpha and two beta subunits. Mg(2+) is required as a cofactor.

Its subcellular location is the cytoplasm. It carries out the reaction tRNA(Phe) + L-phenylalanine + ATP = L-phenylalanyl-tRNA(Phe) + AMP + diphosphate + H(+). This is Phenylalanine--tRNA ligase alpha subunit from Caulobacter vibrioides (strain ATCC 19089 / CIP 103742 / CB 15) (Caulobacter crescentus).